A 661-amino-acid chain; its full sequence is Acyl-coenzyme A oxidase acox-1.2 (661 aa).

FAD contacts are provided by residues 147 to 150 (YAQT), 155 to 156 (GS), and glycine 189. Residues 283 to 286 (KIGY) and arginine 293 each bind substrate. FAD contacts are provided by residues arginine 318 and 338–341 (QQHR). Histidine 340, serine 390, histidine 394, and glutamine 402 together coordinate ATP. An FAD-binding site is contributed by glycine 409. 431 to 432 (YE) serves as a coordination point for substrate. The Proton acceptor role is filled by glutamate 432. Glutamate 434 serves as a coordination point for FAD. ATP is bound by residues 525-528 (RASR) and tyrosine 573. Residues 659 to 661 (AKL) carry the Microbody targeting signal motif.

This sequence belongs to the acyl-CoA oxidase family. Homodimer. Forms a heterodimer with acox-1.1. The cofactor is FAD.

It localises to the peroxisome. The enzyme catalyses asc-omegaC5-CoA + O2 = asc-omegaDeltaC5-CoA + H2O2. The protein operates within lipid metabolism; peroxisomal fatty acid beta-oxidation. With respect to regulation, activated by ATP. ATP binding leads to a conformational change that promotes FAD cofactor binding and enzyme activity. ATP binding likely occurs during acox-1.2 folding and/or dimer formation. The preference for processing substrates with shorter fatty acid chains is likely due to the closed conformation of the active site. Functionally, involved in the first step of peroxisomal beta-oxidation by catalyzing the desaturation of fatty acid-derived side chains of ascaroside pheromones, which regulates development and behavior. Specifically, shortens ascarosides with 5-carbon omega side chain (asc-omega-C5). Does not shorten indol-3-carbonyl(IC)-ascaroside with 7-carbon or 9-carbon side chains. Does not catalyze the desaturation of fatty acids or hydroxylated fatty acids. This is Acyl-coenzyme A oxidase acox-1.2 from Caenorhabditis elegans.